Consider the following 326-residue polypeptide: Protein LEG1 homolog (326 aa).

Positions Met-1–Ser-22 are cleaved as a signal peptide. N-linked (GlcNAc...) asparagine glycans are attached at residues Asn-58, Asn-85, Asn-165, Asn-226, and Asn-245.

It belongs to the LEG1 family.

The protein localises to the secreted. The chain is Protein LEG1 homolog from Dictyostelium discoideum (Social amoeba).